We begin with the raw amino-acid sequence, 240 residues long: T4 protein (240 aa).

It belongs to the poxviruses B9 family.

This is T4 protein from Sheeppox virus (strain KS-1) (SPPV).